A 278-amino-acid chain; its full sequence is Protein U52 (278 aa).

Over residues 1-18 (MTRVSSVSASCTTTNPPK) the composition is skewed to polar residues. Residues 1 to 25 (MTRVSSVSASCTTTNPPKNTREDMS) are disordered.

Belongs to the herpesviridae UL79 family.

This chain is Protein U52, found in Elephas maximus (Indian elephant).